We begin with the raw amino-acid sequence, 325 residues long: DNA-directed RNA polymerase subunit alpha (325 aa).

Positions Met1–Glu231 are alpha N-terminal domain (alpha-NTD). Residues Ile246–Lys325 form an alpha C-terminal domain (alpha-CTD) region.

This sequence belongs to the RNA polymerase alpha chain family. In terms of assembly, homodimer. The RNAP catalytic core consists of 2 alpha, 1 beta, 1 beta' and 1 omega subunit. When a sigma factor is associated with the core the holoenzyme is formed, which can initiate transcription.

The enzyme catalyses RNA(n) + a ribonucleoside 5'-triphosphate = RNA(n+1) + diphosphate. Functionally, DNA-dependent RNA polymerase catalyzes the transcription of DNA into RNA using the four ribonucleoside triphosphates as substrates. In Paraburkholderia phytofirmans (strain DSM 17436 / LMG 22146 / PsJN) (Burkholderia phytofirmans), this protein is DNA-directed RNA polymerase subunit alpha.